We begin with the raw amino-acid sequence, 115 residues long: Probable 4-amino-4-deoxy-L-arabinose-phosphoundecaprenol flippase subunit ArnE (115 aa).

The next 3 helical transmembrane spans lie at 42–62, 65–85, and 93–112; these read PWPWLALLALGLGLACWLLLL, VEVGSAYPMLALNFVLVTLVA, and VDRRHLAGLLLIVAGVALLG. Residues 46-113 enclose the EamA domain; it reads LALLALGLGL…IVAGVALLGR (68 aa).

The protein belongs to the ArnE family. As to quaternary structure, heterodimer of ArnE and ArnF.

It is found in the cell inner membrane. Its pathway is bacterial outer membrane biogenesis; lipopolysaccharide biosynthesis. Functionally, translocates 4-amino-4-deoxy-L-arabinose-phosphoundecaprenol (alpha-L-Ara4N-phosphoundecaprenol) from the cytoplasmic to the periplasmic side of the inner membrane. The chain is Probable 4-amino-4-deoxy-L-arabinose-phosphoundecaprenol flippase subunit ArnE from Pseudomonas paraeruginosa (strain DSM 24068 / PA7) (Pseudomonas aeruginosa (strain PA7)).